We begin with the raw amino-acid sequence, 583 residues long: GTP diphosphokinase CRSH1, chloroplastic (583 aa).

Residues 1 to 13 are compositionally biased toward low complexity; sequence MATAATTSAAAIP. The disordered stretch occupies residues 1 to 68; that stretch reads MATAATTSAA…SSSSSTPAEG (68 aa). The N-terminal 69 residues, 1–69, are a transit peptide targeting the chloroplast; the sequence is MATAATTSAA…SSSSTPAEGG (69 aa). Positions 19 to 39 are enriched in basic residues; it reads RRQHPHPRRPGLRPRRLHRLR. A compositionally biased stretch (low complexity) spans 40-66; that stretch reads LPAQAAAAAAASSPSTSSSSSSSSTPA. The 101-residue stretch at 119-219 folds into the HD domain; the sequence is ALARALAIAA…LELALKLDMM (101 aa). EF-hand domains lie at 473–508 and 510–542; these read GDSN…LGAG and KDAK…IELM. Ca(2+) contacts are provided by Asp-486, Asn-488, Asp-490, Arg-492, Glu-497, Asp-520, Asn-522, Asp-524, Ser-526, and Glu-531.

Belongs to the RelA/SpoT family. As to expression, expressed in roots and shoots.

It is found in the plastid. Its subcellular location is the chloroplast. The enzyme catalyses GTP + ATP = guanosine 3'-diphosphate 5'-triphosphate + AMP. Activated by calcium. Its function is as follows. Possesses calcium-dependent ppGpp (guanosine 3'-diphosphate 5'-diphosphate) synthetase activity in vitro and is able to functionally complement E.coli relA mutants. May be involved in a rapid plant ppGpp-mediated response to pathogens and other stresses. The chain is GTP diphosphokinase CRSH1, chloroplastic from Oryza sativa subsp. japonica (Rice).